The primary structure comprises 643 residues: MPLLFLERFPWPSLRTYTGLSGLALLGTIVSAYRALSQPEDGSGEPEPLTAPLQPEALAPARLTAGGPRARDVAQYLLSDSLFVWVLVNTACCVLMLVAKLIQCIVFGPLRVSERQHLKDKFWNFIFYKFIFIFGVLNVQTVEEVVMWCLWFAGLVFLHLMVQLCKDRFEYLSFSPTTPMSSHGRVLSLLIAMLLSCCGLAVVCCVTGYTHGMHTLAFMAAESLLVTVRTAHVILRYVIHLWDLNHEGTWEGKGTYVYYTDFVMELALLSLDLMHHIHMLLFGNIWLSMASLVIFMQLRYLFHEVQRRIRRHKNYLRVVGNMEARFAVATPEELAVNNDDCAICWDSMQAARKLPCGHLFHNSCLRSWLEQDTSCPTCRMSLNIADGSRAREDHQGENLDENLVPVAAAEGRPRLNQHNHFFHFDGSRIASWLPSFSVEVMHTTNILGITQASNSQLNAMAHQIQEMFPQVPYHLVLQDLQMTRSVEITTDNILEGRIQVPFPTQRSDSLRPALNSPVERPSPDLEEGEASVQTERVPLDLSPRLEETLDFSEVELEPIEVEDFEARGSRFSKSADERQRMLVQRKDDLLQQARKRFLNKSSEDDGASERLLPSEGTSSDPVTLRRRMLAAAAERRLQRQRTT.

6 helical membrane-spanning segments follow: residues 82–102 (LFVW…AKLI), 122–142 (FWNF…VQTV), 186–206 (VLSL…VCCV), 215–235 (TLAF…HVIL), 254–274 (GTYV…LDLM), and 276–296 (HIHM…VIFM). Residues 341-379 (CAICWDSMQAARKLPCGHLFHNSCLRSWLEQDTSCPTCR) form an RING-type zinc finger. Residues 429-449 (IASWLPSFSVEVMHTTNILGI) traverse the membrane as a helical segment. The region spanning 456–498 (QLNAMAHQIQEMFPQVPYHLVLQDLQMTRSVEITTDNILEGRI) is the CUE domain. Residues 504-535 (TQRSDSLRPALNSPVERPSPDLEEGEASVQTE) are disordered. Phosphoserine is present on residues serine 516 and serine 542. A disordered region spans residues 598-624 (LNKSSEDDGASERLLPSEGTSSDPVTL). The segment at 622–640 (VTLRRRMLAAAAERRLQRQ) is VCP/p97-interacting motif (VIM).

Interacts with RNF5. Also forms an ERAD complex containing VCP/p97, NGLY1; PSMC1; SAKS1 and RAD23B required for coupling retrotranslocation, ubiquitination and deglycosylation. Interacts with DERL1. Interacts (through a region distinct from the RING finger) with UBE2G2/UBC7. Component of the VCP/p97-AMFR/gp78 complex that enhances VCP/p97 binding to polyubiquitinated proteins for their degradation by the endoplasmic reticulum-associated degradation (ERAD) pathway. Interacts (via the VIM) with VCP/p97. Interacts (via its membrane domain) with INSIG1; the interaction initiates the sterol-mediated ubiquitination and degradation of HMGCR by the ERAD pathway. Interacts with AUP1, UBE2G2 and RNF139/TRC8; interaction with AUP1 facilitates interaction of AMFR with ubiquitin-conjugating enzyme UBE2G2 and ubiquitin ligase RNF139, leading to sterol-induced ubiquitination of HNGCR and its subsequent proteasomal degradation. Interacts with BAG6. Interacts with USP13 (via UBA 2 domain); the interaction is direct. Interacts with LMBR1L, UBAC2 and CTNNB1. Interacts with C18orf32. Palmitoylation of the RING-type zing finger by ZDHHC6 promotes localization to the peripheral endoplasmic reticulum. Expressed in heart, brain, liver, lung, skeletal muscle, kidney and testis. Not detected in spleen.

Its subcellular location is the endoplasmic reticulum membrane. It carries out the reaction [E2 ubiquitin-conjugating enzyme]-S-ubiquitinyl-L-cysteine + [acceptor protein]-L-cysteine = [E2 ubiquitin-conjugating enzyme]-L-cysteine + [acceptor protein]-S-ubiquitinyl-L-cysteine.. It participates in protein modification; protein ubiquitination. In terms of biological role, E3 ubiquitin-protein ligase that mediates the polyubiquitination of lysine and cysteine residues on target proteins, such as CD3D, CYP3A4, CFTR, INSIG1, SOAT2/ACAT2 and APOB for proteasomal degradation. Component of a VCP/p97-AMFR/gp78 complex that participates in the final step of endoplasmic reticulum-associated degradation (ERAD). The VCP/p97-AMFR/gp78 complex is involved in the sterol-accelerated ERAD degradation of HMGCR through binding to the HMGCR-INSIG1 complex at the ER membrane. In addition, interaction of AMFR with AUP1 facilitates interaction of AMFR with ubiquitin-conjugating enzyme UBE2G2 and ubiquitin ligase RNF139, leading to sterol-induced HMGCR ubiquitination. The ubiquitinated HMGCR is then released from the ER by the complex into the cytosol for subsequent destruction. In addition to ubiquitination on lysine residues, catalyzes ubiquitination on cysteine residues: together with INSIG1, mediates polyubiquitination of SOAT2/ACAT2 at 'Cys-277', leading to its degradation when the lipid levels are low. Catalyzes ubiquitination and subsequent degradation of INSIG1 when cells are depleted of sterols. Mediates polyubiquitination of INSIG2 at 'Cys-215' in some tissues, leading to its degradation. Also regulates ERAD through the ubiquitination of UBL4A a component of the BAG6/BAT3 complex. Also acts as a scaffold protein to assemble a complex that couples ubiquitination, retranslocation and deglycosylation. Mediates tumor invasion and metastasis as a receptor for the GPI/autocrine motility factor. In association with LMBR1L and UBAC2, negatively regulates the canonical Wnt signaling pathway in the lymphocytes by promoting the ubiquitin-mediated degradation of CTNNB1 and Wnt receptors FZD6 and LRP6. Regulates NF-kappa-B and MAPK signaling pathways by mediating 'Lys-27'-linked polyubiquitination of TAB3 and promoting subsequent TAK1/MAP3K7 activation. In Mus musculus (Mouse), this protein is E3 ubiquitin-protein ligase AMFR (Amfr).